A 162-amino-acid chain; its full sequence is uncharacterized protein (162 aa).

This is an uncharacterized protein from Homo sapiens (Human).